A 273-amino-acid polypeptide reads, in one-letter code: 4-hydroxy-tetrahydrodipicolinate reductase (273 aa).

NAD(+) is bound by residues 12-17 (GAGGRM) and Glu-38. Residue Arg-39 coordinates NADP(+). Residues 102-104 (GTT) and 126-129 (AANF) contribute to the NAD(+) site. His-159 serves as the catalytic Proton donor/acceptor. His-160 contributes to the (S)-2,3,4,5-tetrahydrodipicolinate binding site. Catalysis depends on Lys-163, which acts as the Proton donor. 169–170 (GT) serves as a coordination point for (S)-2,3,4,5-tetrahydrodipicolinate.

It belongs to the DapB family. As to quaternary structure, homotetramer.

The protein resides in the cytoplasm. It catalyses the reaction (S)-2,3,4,5-tetrahydrodipicolinate + NAD(+) + H2O = (2S,4S)-4-hydroxy-2,3,4,5-tetrahydrodipicolinate + NADH + H(+). The catalysed reaction is (S)-2,3,4,5-tetrahydrodipicolinate + NADP(+) + H2O = (2S,4S)-4-hydroxy-2,3,4,5-tetrahydrodipicolinate + NADPH + H(+). Its pathway is amino-acid biosynthesis; L-lysine biosynthesis via DAP pathway; (S)-tetrahydrodipicolinate from L-aspartate: step 4/4. Functionally, catalyzes the conversion of 4-hydroxy-tetrahydrodipicolinate (HTPA) to tetrahydrodipicolinate. This is 4-hydroxy-tetrahydrodipicolinate reductase from Escherichia coli O139:H28 (strain E24377A / ETEC).